Reading from the N-terminus, the 113-residue chain is MKVIAAYLLAVLGGNTSPTADDVKSILESVGAEADEEKLEFLLTELKDKDITEVIAAGRERLSSVPSGGGAIDMGAPAAVAGGGAAPAEEAKKEEKVEEKEESDEDMGFSLFD.

The tract at residues 66–113 (PSGGGAIDMGAPAAVAGGGAAPAEEAKKEEKVEEKEESDEDMGFSLFD) is disordered. Over residues 89 to 99 (EEAKKEEKVEE) the composition is skewed to basic and acidic residues.

This sequence belongs to the eukaryotic ribosomal protein P1/P2 family. P1 and P2 exist as dimers at the large ribosomal subunit. In terms of processing, phosphorylated.

Functionally, plays an important role in the elongation step of protein synthesis. The chain is Large ribosomal subunit protein P2B (RPP2B) from Zea mays (Maize).